A 193-amino-acid polypeptide reads, in one-letter code: Glycerol-3-phosphate acyltransferase (193 aa).

A run of 5 helical transmembrane segments spans residues 4-24 (LALI…AVLI), 56-76 (GLVL…GYFL), 80-100 (PLLL…PLFF), 116-136 (APIG…IVLI), and 152-174 (PLFT…CLIV).

The protein belongs to the PlsY family. In terms of assembly, probably interacts with PlsX.

The protein resides in the cell inner membrane. The catalysed reaction is an acyl phosphate + sn-glycerol 3-phosphate = a 1-acyl-sn-glycero-3-phosphate + phosphate. Its pathway is lipid metabolism; phospholipid metabolism. In terms of biological role, catalyzes the transfer of an acyl group from acyl-phosphate (acyl-PO(4)) to glycerol-3-phosphate (G3P) to form lysophosphatidic acid (LPA). This enzyme utilizes acyl-phosphate as fatty acyl donor, but not acyl-CoA or acyl-ACP. This is Glycerol-3-phosphate acyltransferase from Aliivibrio salmonicida (strain LFI1238) (Vibrio salmonicida (strain LFI1238)).